The primary structure comprises 71 residues: BBSome-interacting protein 1 (71 aa).

The protein belongs to the BBIP10 family.

It is found in the cell projection. The protein resides in the cilium. It localises to the cytoplasm. Functionally, required for primary cilia assembly. This is BBSome-interacting protein 1 (bbip1) from Nematostella vectensis (Starlet sea anemone).